Here is a 203-residue protein sequence, read N- to C-terminus: ADP-ribosylation factor-like protein 6-interacting protein 1 (203 aa).

Over 1-41 the chain is Cytoplasmic; it reads MAEGDNRSSNLLAVETASLEEQLQGWGEVMLMADKVLRWER. Residues 42–62 form a helical membrane-spanning segment; it reads AWFPPAIMGVVSLLFLIIYYL. Residues 63 to 65 lie on the Lumenal side of the membrane; the sequence is DPS. A helical transmembrane segment spans residues 66-86; that stretch reads VLSGVSCFVMFLCLADYLVPI. Residues 87 to 133 are Cytoplasmic-facing; the sequence is LAPRIFGSNKWTTEQQQRFHEICSNLVKTRRRAVGWWKRLFSLKEEK. A helical transmembrane segment spans residues 134–175; it reads PKMYFMTMIISLAAVAWVGQQVHNLLLTYLIVTFVLLLPGLN. Topologically, residues 176-203 are lumenal; sequence QHGIILKYIGMAKREINKLLKQKEKKNE.

Belongs to the ARL6ip family. In terms of assembly, homooligomer. Heterodimer with ARL6IP5. Interacts with ARL6. Interacts with TMEM33. Interacts with ATL1. Expressed in the cerebral cortex, cerebellum, hippocampus, olfactory bulbs, medulla oblongate and limbic system (at protein level). Ubiquitous. Expressed in all hematopoietic cell lineages, with highest levels in early myeloid progenitor cells.

Its subcellular location is the endomembrane system. It is found in the endoplasmic reticulum membrane. The protein localises to the endoplasmic reticulum. Functionally, positively regulates SLC1A1/EAAC1-mediated glutamate transport by increasing its affinity for glutamate in a PKC activity-dependent manner. Promotes the catalytic efficiency of SLC1A1/EAAC1 probably by reducing its interaction with ARL6IP5, a negative regulator of SLC1A1/EAAC1-mediated glutamate transport. Plays a role in the formation and stabilization of endoplasmic reticulum tubules. Negatively regulates apoptosis, possibly by modulating the activity of caspase-9 (CASP9). Inhibits cleavage of CASP9-dependent substrates and downstream markers of apoptosis but not CASP9 itself. May be involved in protein transport, membrane trafficking, or cell signaling during hematopoietic maturation. This chain is ADP-ribosylation factor-like protein 6-interacting protein 1 (Arl6ip1), found in Mus musculus (Mouse).